Consider the following 142-residue polypeptide: Hemoglobin subunit alpha-A (142 aa).

The region spanning 2-142 (VLSAADKTNV…VGTVLTAKYR (141 aa)) is the Globin domain. H59 contacts O2. A heme b-binding site is contributed by H88.

The protein belongs to the globin family. As to quaternary structure, heterotetramer of two alpha chains and two beta chains. In terms of tissue distribution, red blood cells.

In terms of biological role, involved in oxygen transport from the lung to the various peripheral tissues. The chain is Hemoglobin subunit alpha-A (HBAA) from Coturnix japonica (Japanese quail).